Reading from the N-terminus, the 285-residue chain is OPEP-3 protein (285 aa).

The sequence is that of OPEP-3 protein (OPEP-3) from Orgyia pseudotsugata multicapsid polyhedrosis virus (OpMNPV).